Reading from the N-terminus, the 197-residue chain is Small ribosomal subunit protein uS4B (197 aa).

The S4 RNA-binding domain occupies 88–150 (SRLDNMVYRM…SRKTEMFVNN (63 aa)).

The protein belongs to the universal ribosomal protein uS4 family. As to quaternary structure, part of the 30S ribosomal subunit. Contacts protein S5. The interaction surface between S4 and S5 is involved in control of translational fidelity.

One of the primary rRNA binding proteins, it binds directly to 16S rRNA where it nucleates assembly of the body of the 30S subunit. In terms of biological role, with S5 and S12 plays an important role in translational accuracy. The sequence is that of Small ribosomal subunit protein uS4B from Clostridium perfringens (strain ATCC 13124 / DSM 756 / JCM 1290 / NCIMB 6125 / NCTC 8237 / Type A).